A 305-amino-acid chain; its full sequence is UDP-3-O-acyl-N-acetylglucosamine deacetylase (305 aa).

Histidine 79, histidine 238, and aspartate 242 together coordinate Zn(2+). Catalysis depends on histidine 265, which acts as the Proton donor.

Belongs to the LpxC family. Zn(2+) serves as cofactor.

The catalysed reaction is a UDP-3-O-[(3R)-3-hydroxyacyl]-N-acetyl-alpha-D-glucosamine + H2O = a UDP-3-O-[(3R)-3-hydroxyacyl]-alpha-D-glucosamine + acetate. Its pathway is glycolipid biosynthesis; lipid IV(A) biosynthesis; lipid IV(A) from (3R)-3-hydroxytetradecanoyl-[acyl-carrier-protein] and UDP-N-acetyl-alpha-D-glucosamine: step 2/6. Catalyzes the hydrolysis of UDP-3-O-myristoyl-N-acetylglucosamine to form UDP-3-O-myristoylglucosamine and acetate, the committed step in lipid A biosynthesis. This Actinobacillus succinogenes (strain ATCC 55618 / DSM 22257 / CCUG 43843 / 130Z) protein is UDP-3-O-acyl-N-acetylglucosamine deacetylase.